A 222-amino-acid polypeptide reads, in one-letter code: 2-C-methyl-D-erythritol 4-phosphate cytidylyltransferase (222 aa).

This sequence belongs to the IspD/TarI cytidylyltransferase family. IspD subfamily.

The catalysed reaction is 2-C-methyl-D-erythritol 4-phosphate + CTP + H(+) = 4-CDP-2-C-methyl-D-erythritol + diphosphate. The protein operates within isoprenoid biosynthesis; isopentenyl diphosphate biosynthesis via DXP pathway; isopentenyl diphosphate from 1-deoxy-D-xylulose 5-phosphate: step 2/6. In terms of biological role, catalyzes the formation of 4-diphosphocytidyl-2-C-methyl-D-erythritol from CTP and 2-C-methyl-D-erythritol 4-phosphate (MEP). The chain is 2-C-methyl-D-erythritol 4-phosphate cytidylyltransferase from Porphyromonas gingivalis (strain ATCC 33277 / DSM 20709 / CIP 103683 / JCM 12257 / NCTC 11834 / 2561).